Here is a 670-residue protein sequence, read N- to C-terminus: Rhophilin-1 (670 aa).

The interval 1-20 is disordered; the sequence is MILEERPDGAGAGEESPRLQ. Residues 23–97 enclose the REM-1 domain; the sequence is DSLTQIQCGQ…LEELSGGVDP (75 aa). A Phosphoserine modification is found at S24. Residues 108-457 form the BRO1 domain; the sequence is PMIPLGLKET…LAKYAELDRE (350 aa). The PDZ domain maps to 513-592; the sequence is PVHLTRGEGG…ASLQVVSLLP (80 aa). The segment at 616–670 is disordered; the sequence is QREHGCKTPASTWASPRPLLNWSRKAQQGKTGGCPQPCAPVKPAPPSSLKHPGWP. Residues 652–661 show a composition bias toward pro residues; the sequence is PCAPVKPAPP.

It belongs to the RHPN family. Binds specifically to GTP-Rho. Interacts with ROPN1.

In terms of biological role, has no enzymatic activity. May serve as a target for Rho, and interact with some cytoskeletal component upon Rho binding or relay a Rho signal to other molecules. This Homo sapiens (Human) protein is Rhophilin-1.